The following is a 159-amino-acid chain: Ribosomal RNA large subunit methyltransferase H (159 aa).

S-adenosyl-L-methionine contacts are provided by residues L76, G108, and 127–132 (FGRMTY).

It belongs to the RNA methyltransferase RlmH family. In terms of assembly, homodimer.

The protein localises to the cytoplasm. It carries out the reaction pseudouridine(1915) in 23S rRNA + S-adenosyl-L-methionine = N(3)-methylpseudouridine(1915) in 23S rRNA + S-adenosyl-L-homocysteine + H(+). Its function is as follows. Specifically methylates the pseudouridine at position 1915 (m3Psi1915) in 23S rRNA. The sequence is that of Ribosomal RNA large subunit methyltransferase H from Carboxydothermus hydrogenoformans (strain ATCC BAA-161 / DSM 6008 / Z-2901).